The following is a 349-amino-acid chain: 4-hydroxythreonine-4-phosphate dehydrogenase (349 aa).

H141 and T142 together coordinate substrate. Residues H176, H221, and H276 each contribute to the a divalent metal cation site. K284, N293, and R302 together coordinate substrate.

Belongs to the PdxA family. In terms of assembly, homodimer. Zn(2+) serves as cofactor. The cofactor is Mg(2+). Co(2+) is required as a cofactor.

Its subcellular location is the cytoplasm. It carries out the reaction 4-(phosphooxy)-L-threonine + NAD(+) = 3-amino-2-oxopropyl phosphate + CO2 + NADH. It functions in the pathway cofactor biosynthesis; pyridoxine 5'-phosphate biosynthesis; pyridoxine 5'-phosphate from D-erythrose 4-phosphate: step 4/5. Catalyzes the NAD(P)-dependent oxidation of 4-(phosphooxy)-L-threonine (HTP) into 2-amino-3-oxo-4-(phosphooxy)butyric acid which spontaneously decarboxylates to form 3-amino-2-oxopropyl phosphate (AHAP). This is 4-hydroxythreonine-4-phosphate dehydrogenase from Methylorubrum extorquens (strain PA1) (Methylobacterium extorquens).